Consider the following 126-residue polypeptide: Large ribosomal subunit protein bL17 (126 aa).

The protein belongs to the bacterial ribosomal protein bL17 family. Part of the 50S ribosomal subunit. Contacts protein L32.

The protein is Large ribosomal subunit protein bL17 of Lawsonia intracellularis (strain PHE/MN1-00).